The following is a 211-amino-acid chain: PITH domain-containing protein GA19395 (211 aa).

The PITH domain maps to 20–192 (DHALEMGIEY…GVTICNYEAR (173 aa)).

It belongs to the PITHD1 family.

The polypeptide is PITH domain-containing protein GA19395 (Drosophila pseudoobscura pseudoobscura (Fruit fly)).